We begin with the raw amino-acid sequence, 381 residues long: PqqA peptide cyclase (381 aa).

Positions 12 to 228 (VGPPLWLLAE…AEYRQRLAAE (217 aa)) constitute a Radical SAM core domain. 3 residues coordinate [4Fe-4S] cluster: Cys26, Cys30, and Cys33.

This sequence belongs to the radical SAM superfamily. PqqE family. In terms of assembly, interacts with PqqD. The interaction is necessary for activity of PqqE. The cofactor is [4Fe-4S] cluster.

It catalyses the reaction [PQQ precursor protein] + S-adenosyl-L-methionine = E-Y cross-linked-[PQQ precursor protein] + 5'-deoxyadenosine + L-methionine + H(+). It functions in the pathway cofactor biosynthesis; pyrroloquinoline quinone biosynthesis. Its function is as follows. Catalyzes the cross-linking of a glutamate residue and a tyrosine residue in the PqqA protein as part of the biosynthesis of pyrroloquinoline quinone (PQQ). In Pseudomonas aeruginosa (strain LESB58), this protein is PqqA peptide cyclase.